A 404-amino-acid chain; its full sequence is Cysteine desulfurase IscS (404 aa).

Pyridoxal 5'-phosphate contacts are provided by residues 75 to 76 (AT), asparagine 155, glutamine 183, and 203 to 205 (SSH). Residue lysine 206 is modified to N6-(pyridoxal phosphate)lysine. Threonine 243 provides a ligand contact to pyridoxal 5'-phosphate. The active-site Cysteine persulfide intermediate is cysteine 328. Cysteine 328 contacts [2Fe-2S] cluster.

It belongs to the class-V pyridoxal-phosphate-dependent aminotransferase family. NifS/IscS subfamily. In terms of assembly, homodimer. Forms a heterotetramer with IscU, interacts with other sulfur acceptors. It depends on pyridoxal 5'-phosphate as a cofactor.

It is found in the cytoplasm. It carries out the reaction (sulfur carrier)-H + L-cysteine = (sulfur carrier)-SH + L-alanine. It participates in cofactor biosynthesis; iron-sulfur cluster biosynthesis. In terms of biological role, master enzyme that delivers sulfur to a number of partners involved in Fe-S cluster assembly, tRNA modification or cofactor biosynthesis. Catalyzes the removal of elemental sulfur atoms from cysteine to produce alanine. Functions as a sulfur delivery protein for Fe-S cluster synthesis onto IscU, an Fe-S scaffold assembly protein, as well as other S acceptor proteins. This chain is Cysteine desulfurase IscS, found in Histophilus somni (strain 129Pt) (Haemophilus somnus).